We begin with the raw amino-acid sequence, 450 residues long: MRECISIHVGQAGVQIGNACWELYCLEHGIQPDGQMPSDKTIGGGDDSFNTFFSETGAGKHVPRAVFVDLEPTVVDEVRTGTYRQLFHPEQLITGKEDAASNYARGHYTIGKEIVDLVLDRIRKLADLCTGLQGFLIFHSFGGGTGSGFASLLMERLSVDYSKKSKLEFAIYPAPQVSTAVVEPYNSILTTHTTLEHSDCAFMVDNEAIYDICRRNLDIERPTYTNLNRLIGQIVSSITASLRFDGALNVDLTEFQTNLVPYPRIHFPLATYAPVISAEKAYHEQLSVAEITNACFEPANQMVKCDPRHGKYMACCMLYRGDVVPKDVNAAIATIKTKRTIQFVDWCPTGFKVGINYQPPTVVPGGDLAKVQRAVCMLSNTTAIAEAWARLVHKFDLMYAKWAFVHWYVGEGMEEGEFSEAREDLAALEKDCEEVGVDSVEAEAEEGEAY.

The MREC motif motif lies at 1–4 (MREC). Q11 serves as a coordination point for GTP. K40 bears the N6-acetyllysine mark. GTP contacts are provided by E71, S140, G144, T145, T179, N206, and N228. E71 lines the Mg(2+) pocket. E254 is an active-site residue. Y282 is modified (3'-nitrotyrosine). S439 carries the phosphoserine modification. Position 450 is a 3'-nitrotyrosine (Y450).

The protein belongs to the tubulin family. In terms of assembly, dimer of alpha and beta chains. A typical microtubule is a hollow water-filled tube with an outer diameter of 25 nm and an inner diameter of 15 nM. Alpha-beta heterodimers associate head-to-tail to form protofilaments running lengthwise along the microtubule wall with the beta-tubulin subunit facing the microtubule plus end conferring a structural polarity. Microtubules usually have 13 protofilaments but different protofilament numbers can be found in some organisms and specialized cells. Requires Mg(2+) as cofactor. Some glutamate residues at the C-terminus are polyglutamylated, resulting in polyglutamate chains on the gamma-carboxyl group. Polyglutamylation plays a key role in microtubule severing by spastin (SPAST). SPAST preferentially recognizes and acts on microtubules decorated with short polyglutamate tails: severing activity by SPAST increases as the number of glutamates per tubulin rises from one to eight, but decreases beyond this glutamylation threshold. Glutamylation is also involved in cilia motility. Post-translationally, some glutamate residues at the C-terminus are monoglycylated but not polyglycylated due to the absence of functional TTLL10 in human. Monoglycylation is mainly limited to tubulin incorporated into cilia and flagella axonemes, which is required for their stability and maintenance. Flagella glycylation controls sperm motility. Both polyglutamylation and monoglycylation can coexist on the same protein on adjacent residues, and lowering glycylation levels increases polyglutamylation, and reciprocally. In terms of processing, acetylation of alpha chains at Lys-40 is located inside the microtubule lumen. This modification has been correlated with increased microtubule stability, intracellular transport and ciliary assembly. Methylation of alpha chains at Lys-40 is found in mitotic microtubules and is required for normal mitosis and cytokinesis contributing to genomic stability. Post-translationally, nitration of Tyr-450 is irreversible and interferes with normal dynein intracellular distribution. In terms of processing, undergoes a tyrosination/detyrosination cycle, the cyclic removal and re-addition of a C-terminal tyrosine residue by the enzymes tubulin tyrosine carboxypeptidase (MATCAP1/KIAA0895L, VASH1 or VASH2) and tubulin tyrosine ligase (TTL), respectively. Tyrosination promotes microtubule interaction with CAP-Gly domain-containing proteins such as CLIP1, CLIP2 and DCTN1. Tyrosination regulates the initiation of dynein-dynactin motility via interaction with DCTN1, which brings the dynein-dynactin complex into contact with microtubules. In neurons, tyrosinated tubulins mediate the initiation of retrograde vesicle transport. Post-translationally, detyrosination is involved in metaphase plate congression by guiding chromosomes during mitosis: detyrosination promotes interaction with CENPE, promoting pole-proximal transport of chromosomes toward the equator. Detyrosination increases microtubules-dependent mechanotransduction in dystrophic cardiac and skeletal muscle. In cardiomyocytes, detyrosinated microtubules are required to resist to contractile compression during contraction: detyrosination promotes association with desmin (DES) at force-generating sarcomeres, leading to buckled microtubules and mechanical resistance to contraction.

The protein localises to the cytoplasm. It is found in the cytoskeleton. The enzyme catalyses GTP + H2O = GDP + phosphate + H(+). Tubulin is the major constituent of microtubules, a cylinder consisting of laterally associated linear protofilaments composed of alpha- and beta-tubulin heterodimers. Microtubules grow by the addition of GTP-tubulin dimers to the microtubule end, where a stabilizing cap forms. Below the cap, tubulin dimers are in GDP-bound state, owing to GTPase activity of alpha-tubulin. This chain is Tubulin alpha-3E chain (TUBA3E), found in Homo sapiens (Human).